A 506-amino-acid chain; its full sequence is MDLLLLEKALLGLFAAAVVAIAVSKLRGKRFKLPPGPLGFPVFGNWLQVGDDLNQRKLANLSKKFGDVYLLRMGQRNLVVVSSPEMAKEVLHTQGVEFGSRTRNVVFDIFTGKGQDMVFTVYSEHWRKMRRIMTVPFFTNKVVQQQRFNWEDEAARVVEDVKKDPQAATTGIVLRRRLQLLMYNNMYRIMFDRRFESVDDPLFNKLKALNGERSRLAQSFEYNYGDFIPILRPFLRGYLKLVKEVKERRLKLFKDYFVEERKKLTSTKSMTEENFKCAIDHVLDAQQKGEINEDNVLYIVENINVAAIETTLWSIEWGIAELVNHPDIQKKLRAEIDRVLGPDHQITEPDTHKLPYLQAVIKETLRLRMAIPLLVPHMNLNDAKLAGYDIPAESKILVNAWWLANNPAHWKDPQVFRPERFLEEESGVEANGNDFRYIPFGVGRRSCPGIILALPILGITIGRMVQNFELLPPPGQSKIDTSEKGGQFSLFILNHSTIVLKPRSSV.

Residues 3 to 23 (LLLLEKALLGLFAAAVVAIAV) traverse the membrane as a helical segment. Residues 213–218 (RSRLAQ) and Ala-306 contribute to the (E)-cinnamate site. Cys-447 is a binding site for heme.

This sequence belongs to the cytochrome P450 family. It depends on heme as a cofactor.

The protein localises to the membrane. The catalysed reaction is (E)-cinnamate + reduced [NADPH--hemoprotein reductase] + O2 = (E)-4-coumarate + oxidized [NADPH--hemoprotein reductase] + H2O + H(+). It functions in the pathway phenylpropanoid metabolism; trans-4-coumarate biosynthesis; trans-4-coumarate from trans-cinnamate: step 1/1. Catalyzes the first oxidative step of the phenylpropanoid pathway in higher plants by transforming trans-cinnamate into p-coumarate. The compounds formed by this pathway are essential components for lignification, pollination, and defense against ultraviolet light, predators and pathogens. The chain is Trans-cinnamate 4-monooxygenase (CYP73A2) from Ruta graveolens (Common rue).